A 229-amino-acid chain; its full sequence is Putative N-acetylmannosamine-6-phosphate 2-epimerase (229 aa).

It belongs to the NanE family.

The enzyme catalyses an N-acyl-D-glucosamine 6-phosphate = an N-acyl-D-mannosamine 6-phosphate. The protein operates within amino-sugar metabolism; N-acetylneuraminate degradation; D-fructose 6-phosphate from N-acetylneuraminate: step 3/5. In terms of biological role, converts N-acetylmannosamine-6-phosphate (ManNAc-6-P) to N-acetylglucosamine-6-phosphate (GlcNAc-6-P). The polypeptide is Putative N-acetylmannosamine-6-phosphate 2-epimerase (Pediococcus pentosaceus (strain ATCC 25745 / CCUG 21536 / LMG 10740 / 183-1w)).